We begin with the raw amino-acid sequence, 526 residues long: Secreted triacylglycerol lipase LIP4 (526 aa).

An N-terminal signal peptide occupies residues 1–26 (MVRLSYVRFGVAWCIAIIIVSGFSNA). Asparagine 186 carries an N-linked (GlcNAc...) asparagine glycan. Catalysis depends on serine 195, which acts as the Nucleophile. Asparagine 228 is a glycosylation site (N-linked (GlcNAc...) asparagine). Residues aspartate 342 and histidine 376 contribute to the active site. Residue asparagine 377 is glycosylated (N-linked (GlcNAc...) asparagine). Positions 412–526 (TGPSASSSAG…TMPAPPLMER (115 aa)) are disordered. Composition is skewed to low complexity over residues 413–423 (GPSASSSAGGP) and 430–457 (TGGH…HAPA). An N-linked (GlcNAc...) asparagine glycan is attached at asparagine 462. Residues 480-490 (PSTGATSPAPS) show a composition bias toward low complexity. The segment covering 516-526 (RTMPAPPLMER) has biased composition (pro residues).

Belongs to the AB hydrolase superfamily. Lipase family. Class Lip subfamily.

The protein localises to the secreted. The catalysed reaction is a triacylglycerol + H2O = a diacylglycerol + a fatty acid + H(+). The enzyme catalyses a monoacylglycerol + H2O = glycerol + a fatty acid + H(+). It carries out the reaction a diacylglycerol + H2O = a monoacylglycerol + a fatty acid + H(+). Its function is as follows. Secreted lipase that hydrolyzes acylglycerol lipids such as triacylglycerols and consequently releases free fatty acid. Can hydrolyze 4-nitrophenyl palmitate to release 4-nitrophenol and palmitoic acid. Due to an absence of fatty acid synthase genes in Malassezia species, secretory lipases are essential for the yeast to generate free fatty acids from degradation of sebum and assimilate them as lipid sources for growth. Plays important roles not only in lipid metabolism but also in the immune response of host cells and pathogenesis. This Malassezia furfur (Pityriasis versicolor infection agent) protein is Secreted triacylglycerol lipase LIP4.